Reading from the N-terminus, the 251-residue chain is MKTIISAKDVHLSYGDYEALHGINLNFKEKELTALIGPSGCGKSTFLRCLNRMNDDIENIKITGEIKFEGQDIYGSKMDLVALRKNVGMVFQQPTPFPFSVYDNVAYGLKIAGVKDKELIDQRVEESLKQAAIWKETKDNLNRNAQAFSGGQQQRICIARALAIRPKVVLLDEPTSALDPISSSEIEETLMDLKHQYTFIMVTHNLQQAGRVSDQTAFLMNGDLVEAGPTEEMFIAPKKQITSDYLNGRFG.

In terms of domain architecture, ABC transporter spans 5–246 (ISAKDVHLSY…PKKQITSDYL (242 aa)). 37–44 (GPSGCGKS) provides a ligand contact to ATP.

This sequence belongs to the ABC transporter superfamily. Phosphate importer (TC 3.A.1.7) family. In terms of assembly, the complex is composed of two ATP-binding proteins (PstB), two transmembrane proteins (PstC and PstA) and a solute-binding protein (PstS).

The protein localises to the cell membrane. It catalyses the reaction phosphate(out) + ATP + H2O = ADP + 2 phosphate(in) + H(+). Its function is as follows. Part of the ABC transporter complex PstSACB involved in phosphate import. Responsible for energy coupling to the transport system. This Lactobacillus acidophilus (strain ATCC 700396 / NCK56 / N2 / NCFM) protein is Phosphate import ATP-binding protein PstB 2.